The chain runs to 261 residues: Hemin import ATP-binding protein HmuV (261 aa).

The region spanning 7-243 is the ABC transporter domain; that stretch reads LRGQNLSLQF…EIIDAVYGYK (237 aa). 39–46 contributes to the ATP binding site; sequence GPNGAGKS.

It belongs to the ABC transporter superfamily. Heme (hemin) importer (TC 3.A.1.14.5) family. As to quaternary structure, the complex is composed of two ATP-binding proteins (HmuV), two transmembrane proteins (HmuU) and a solute-binding protein (HmuT).

Its subcellular location is the cell inner membrane. Its function is as follows. Part of the ABC transporter complex HmuTUV involved in hemin import. Responsible for energy coupling to the transport system. The polypeptide is Hemin import ATP-binding protein HmuV (Vibrio vulnificus (strain YJ016)).